Reading from the N-terminus, the 130-residue chain is DNA-directed RNA polymerase subunit omega (130 aa).

A disordered region spans residues Thr108–Glu130.

Belongs to the RNA polymerase subunit omega family. The RNAP catalytic core consists of 2 alpha, 1 beta, 1 beta' and 1 omega subunit. When a sigma factor is associated with the core the holoenzyme is formed, which can initiate transcription.

The catalysed reaction is RNA(n) + a ribonucleoside 5'-triphosphate = RNA(n+1) + diphosphate. Its function is as follows. Promotes RNA polymerase assembly. Latches the N- and C-terminal regions of the beta' subunit thereby facilitating its interaction with the beta and alpha subunits. The chain is DNA-directed RNA polymerase subunit omega from Rhodopseudomonas palustris (strain ATCC BAA-98 / CGA009).